The primary structure comprises 388 residues: ATP phosphoribosyltransferase regulatory subunit (388 aa).

Belongs to the class-II aminoacyl-tRNA synthetase family. HisZ subfamily. Heteromultimer composed of HisG and HisZ subunits.

It is found in the cytoplasm. It participates in amino-acid biosynthesis; L-histidine biosynthesis; L-histidine from 5-phospho-alpha-D-ribose 1-diphosphate: step 1/9. In terms of biological role, required for the first step of histidine biosynthesis. May allow the feedback regulation of ATP phosphoribosyltransferase activity by histidine. The protein is ATP phosphoribosyltransferase regulatory subunit of Acinetobacter baumannii (strain AB307-0294).